Reading from the N-terminus, the 55-residue chain is uncharacterized protein (55 aa).

The next 2 membrane-spanning stretches (helical) occupy residues 5–25 and 26–46; these read LISIVCIAVFFCLNILGMMHM and LPLYITSPLLFLSILFTLYRL.

The protein localises to the cell membrane. This is an uncharacterized protein from Bacillus subtilis (strain 168).